The chain runs to 407 residues: MAVAIKKEKTKFAPVKEVLSEKDHANYTKFQDTSKLEWFCRTSNHKKFKSHSLLKAVRNPTETRIETQTLYFTDLTNGKCGLIQLLYSSVMGGIYKGFQLNFKIFKASSEENSEEDIDIWESFKIDNIKDFDTLKVESDNVTFHFVPLENSSSSGFAQLLIKIDIPKGSTSCLLKDLKVDITVNLQEGFIINPDGSNYYLDKSISLEELAKRDSSSTSRKMIRHVFVPRGFCNGTISYKKNDKPVKLDLKDTPMLYLDAVQGLIPNKAASKWNFLCFNGEKRSMMCIEFTTTKEYGSTTVTIWAVSDKDKILEVGSSVNDHAVKFPSTKEDKQNGWKYPTSISFPRGFEESNLRLVNRYDIMSELPAFIRSIAENLANMKPFIYQFCQKSKFDDDEGVSIIESTFIN.

Lys22 is covalently cross-linked (Glycyl lysine isopeptide (Lys-Gly) (interchain with G-Cter in ubiquitin)).

Belongs to the SVF1 family.

It localises to the cytoplasm. This is an uncharacterized protein from Saccharomyces cerevisiae (strain ATCC 204508 / S288c) (Baker's yeast).